Here is a 243-residue protein sequence, read N- to C-terminus: Small ribosomal subunit protein uS2c (243 aa).

Positions glycine 224–glutamine 243 are disordered.

This sequence belongs to the universal ribosomal protein uS2 family.

Its subcellular location is the plastid. The protein resides in the chloroplast. This Rhodomonas salina (Cryptomonas salina) protein is Small ribosomal subunit protein uS2c (rps2).